Consider the following 87-residue polypeptide: Kappa-2-bungarotoxin (87 aa).

The signal sequence occupies residues 1–21 (MKTLLLTLVVVTIVCLDLGYT). Intrachain disulfides connect C24–C42, C35–C63, C48–C52, C67–C79, and C80–C85.

This sequence belongs to the three-finger toxin family. Long-chain subfamily. Kappa-neurotoxin sub-subfamily. In terms of assembly, homodimer and heterodimer with kappa 3-bungarotoxin; non-covalently linked. As to expression, expressed by the venom gland.

It localises to the secreted. Postsynaptic neurotoxin that binds and inhibits neuronal nicotinic acetylcholine receptors (nAChR) with high affinity (IC(50)&lt;100 nM). Is a selective, and slowly reversible antagonist of alpha-3/CHRNA3-containing and some alpha-4/CHRNA4-containing AChRs. The chain is Kappa-2-bungarotoxin from Bungarus multicinctus (Many-banded krait).